We begin with the raw amino-acid sequence, 367 residues long: Germination protease (367 aa).

Positions 1-15 (MKEPLDLSKYSVRTD) are excised as a propeptide.

This sequence belongs to the peptidase A25 family. Homotetramer. Autoproteolytically processed. The inactive tetrameric zymogen termed p46 autoprocesses to a smaller form termed p41, which is active only during spore germination.

It carries out the reaction Endopeptidase action with P4 Glu or Asp, P1 preferably Glu &gt; Asp, P1' hydrophobic and P2' Ala.. Functionally, initiates the rapid degradation of small, acid-soluble proteins during spore germination. The polypeptide is Germination protease (Bacillus cereus (strain ATCC 10987 / NRS 248)).